The following is a 163-amino-acid chain: 3-hydroxyacyl-[acyl-carrier-protein] dehydratase FabZ (163 aa).

Residue H58 is part of the active site.

This sequence belongs to the thioester dehydratase family. FabZ subfamily.

It localises to the cytoplasm. The catalysed reaction is a (3R)-hydroxyacyl-[ACP] = a (2E)-enoyl-[ACP] + H2O. In terms of biological role, involved in unsaturated fatty acids biosynthesis. Catalyzes the dehydration of short chain beta-hydroxyacyl-ACPs and long chain saturated and unsaturated beta-hydroxyacyl-ACPs. In Francisella tularensis subsp. tularensis (strain FSC 198), this protein is 3-hydroxyacyl-[acyl-carrier-protein] dehydratase FabZ.